A 377-amino-acid chain; its full sequence is uncharacterized protein (377 aa).

The first 23 residues, 1–23 (MLKFRNFFKLTLLTLASAFFLSG), serve as a signal peptide directing secretion. A lipid anchor (N-palmitoyl cysteine) is attached at C24. C24 carries S-diacylglycerol cysteine lipidation.

It is found in the cell membrane. This is an uncharacterized protein from Mycoplasma genitalium (strain ATCC 33530 / DSM 19775 / NCTC 10195 / G37) (Mycoplasmoides genitalium).